Consider the following 215-residue polypeptide: GTP-binding nuclear protein Ran (215 aa).

One can recognise a Small GTPase Ran-type domain in the interval 6–170 (DIPTFKLVLV…LWLVRKLLGD (165 aa)). GTP contacts are provided by residues 17–24 (DGGTGKTT), 35–41 (EKKYVAT), G67, 121–124 (NFVD), and 149–151 (SAK). The tract at residues 36–44 (KKYVATLGV) is switch-I. Residues 67–83 (GQEKFGGLRDGYYIQGQ) form a switch-II region. The tract at residues 210–215 (DDDEDL) is interaction with RANBP1.

It belongs to the small GTPase superfamily. Ran family. In terms of assembly, monomer. Interacts with RANGAP1, which promotes RAN-mediated GTP hydrolysis. Interacts with KPNB1. Interaction with KPNB1 inhibits RANGAP1-mediated stimulation of GTPase activity. Interacts with RCC1 which promotes the exchange of RAN-bound GDP by GTP. Interaction with KPNB1 inhibits RCC1-mediated exchange of RAN-bound GDP by GTP. Interacts (GTP-bound form) with TNPO1; the interaction is direct. Interacts with KPNB1 and with TNPO1; both inhibit RAN GTPase activity. Interacts (via C-terminus) with RANBP1, which alleviates the inhibition of RAN GTPase activity. Interacts with RANGRF, which promotes the release of bound guanine nucleotide. RANGRF and RCC1 compete for an overlapping binding site on RAN. Identified in a complex with KPNA2 and CSE1L; interaction with RANBP1 mediates dissociation of RAN from this complex. Interaction with both RANBP1 and KPNA2 promotes dissociation of the complex between RAN and KPNB1. Identified in a complex composed of RAN, RANGAP1 and RANBP1. Identified in a complex that contains TNPO1, RAN and RANBP1. Identified in a nuclear export complex with XPO1. Interaction with RANBP1 or RANBP2 induces a conformation change in the complex formed by XPO1 and RAN that triggers the release of the nuclear export signal of cargo proteins. Component of a nuclear export receptor complex composed of KPNB1, RAN, SNUPN and XPO1. It depends on Mg(2+) as a cofactor.

Its subcellular location is the nucleus. The protein resides in the nucleus envelope. It localises to the cytoplasm. It is found in the cytosol. Functionally, GTPase involved in nucleocytoplasmic transport, participating both to the import and the export from the nucleus of proteins and RNAs. Switches between a cytoplasmic GDP- and a nuclear GTP-bound state by nucleotide exchange and GTP hydrolysis. Nuclear import receptors such as importin beta bind their substrates only in the absence of GTP-bound RAN and release them upon direct interaction with GTP-bound RAN, while export receptors behave in the opposite way. Thereby, RAN controls cargo loading and release by transport receptors in the proper compartment and ensures the directionality of the transport. Interaction with RANBP1 induces a conformation change in the complex formed by XPO1 and RAN that triggers the release of the nuclear export signal of cargo proteins. RAN (GTP-bound form) triggers microtubule assembly at mitotic chromosomes and is required for normal mitotic spindle assembly and chromosome segregation. Required for normal progress through mitosis. This is GTP-binding nuclear protein Ran (ran-1) from Onchocerca volvulus.